A 130-amino-acid chain; its full sequence is L-ectoine synthase (130 aa).

It belongs to the ectoine synthase family.

It carries out the reaction (2S)-4-acetamido-2-aminobutanoate = L-ectoine + H2O. It functions in the pathway amine and polyamine biosynthesis; ectoine biosynthesis; L-ectoine from L-aspartate 4-semialdehyde: step 3/3. In terms of biological role, catalyzes the circularization of gamma-N-acetyl-alpha,gamma-diaminobutyric acid (ADABA) to ectoine (1,4,5,6-tetrahydro-2-methyl-4-pyrimidine carboxylic acid), which is an excellent osmoprotectant. The protein is L-ectoine synthase of Desulfatibacillum aliphaticivorans.